The following is a 132-amino-acid chain: Ribosome-binding factor A (132 aa).

Belongs to the RbfA family. As to quaternary structure, monomer. Binds 30S ribosomal subunits, but not 50S ribosomal subunits or 70S ribosomes.

The protein localises to the cytoplasm. One of several proteins that assist in the late maturation steps of the functional core of the 30S ribosomal subunit. Associates with free 30S ribosomal subunits (but not with 30S subunits that are part of 70S ribosomes or polysomes). Required for efficient processing of 16S rRNA. May interact with the 5'-terminal helix region of 16S rRNA. In Pseudomonas putida (strain ATCC 700007 / DSM 6899 / JCM 31910 / BCRC 17059 / LMG 24140 / F1), this protein is Ribosome-binding factor A.